A 271-amino-acid chain; its full sequence is Keratin-associated protein 10-5 (271 aa).

22 consecutive repeat copies span residues 26 to 30 (CCEPP), 51 to 55 (CCQAA), 73 to 77 (CCQPA), 78 to 82 (CCASS), 88 to 92 (CCVPV), 93 to 97 (CCKPV), 98 to 102 (CCLPT), 110 to 114 (CCQQS), 120 to 124 (CCASS), 130 to 134 (CCVPV), 135 to 139 (CCKPV), 140 to 144 (CCVPT), 152 to 156 (CCQHS), 162 to 166 (CCTSS), 177 to 181 (CCKPV), 187 to 191 (CCVPV), 199 to 203 (CCQQS), 209 to 213 (CCTTS), 214 to 218 (CCRPS), 233 to 237 (CCLPI), 240 to 244 (CCAPA), and 251 to 255 (CCRPA). A 22 X 5 AA repeats of C-C-X(3) region spans residues 26-255 (CCEPPCGTAP…SYQASCCRPA (230 aa)).

Belongs to the KRTAP type 10 family. Interacts with hair keratins. In terms of tissue distribution, restricted to a narrow region of the hair fiber cuticle, lying approximately 20 cell layers above the apex of the dermal papilla of the hair root; not detected in any other tissues.

Functionally, in the hair cortex, hair keratin intermediate filaments are embedded in an interfilamentous matrix, consisting of hair keratin-associated proteins (KRTAP), which are essential for the formation of a rigid and resistant hair shaft through their extensive disulfide bond cross-linking with abundant cysteine residues of hair keratins. The matrix proteins include the high-sulfur and high-glycine-tyrosine keratins. This Homo sapiens (Human) protein is Keratin-associated protein 10-5 (KRTAP10-5).